The following is a 179-amino-acid chain: Large ribosomal subunit protein uL5 (179 aa).

It belongs to the universal ribosomal protein uL5 family. In terms of assembly, part of the 50S ribosomal subunit; part of the 5S rRNA/L5/L18/L25 subcomplex. Contacts the 5S rRNA and the P site tRNA. Forms a bridge to the 30S subunit in the 70S ribosome.

Functionally, this is one of the proteins that bind and probably mediate the attachment of the 5S RNA into the large ribosomal subunit, where it forms part of the central protuberance. In the 70S ribosome it contacts protein S13 of the 30S subunit (bridge B1b), connecting the 2 subunits; this bridge is implicated in subunit movement. Contacts the P site tRNA; the 5S rRNA and some of its associated proteins might help stabilize positioning of ribosome-bound tRNAs. In Xylella fastidiosa (strain M23), this protein is Large ribosomal subunit protein uL5.